Here is a 183-residue protein sequence, read N- to C-terminus: MTATAQQLEFLKQNIKTIPDYPKPGILFRDVTSLLEKPDAYALSIELLAARYRAAGITKVVGTEARGFLFGAPVALALGVGFVPVRKPGKLPRATLAESYALEYGTDTLEIHQDAIDANDRVLMVDDLLATGGTIEATTRLIRRLGGVVHDAAFIIDLPALGGEARLEAMNINCYSLVSFDGH.

It belongs to the purine/pyrimidine phosphoribosyltransferase family. As to quaternary structure, homodimer.

Its subcellular location is the cytoplasm. The enzyme catalyses AMP + diphosphate = 5-phospho-alpha-D-ribose 1-diphosphate + adenine. It functions in the pathway purine metabolism; AMP biosynthesis via salvage pathway; AMP from adenine: step 1/1. In terms of biological role, catalyzes a salvage reaction resulting in the formation of AMP, that is energically less costly than de novo synthesis. This is Adenine phosphoribosyltransferase from Edwardsiella ictaluri (strain 93-146).